The primary structure comprises 98 residues: NADH-ubiquinone oxidoreductase chain 4L (98 aa).

The next 3 helical transmembrane spans lie at 1-21 (MSLTYMNMFMAFTISLLGLLM), 29-49 (SLLCLEGMMLSLFVMMTMTIL), and 61-81 (IILLVFAACEAALGLSLLVMV).

Belongs to the complex I subunit 4L family. As to quaternary structure, core subunit of respiratory chain NADH dehydrogenase (Complex I) which is composed of 45 different subunits.

It is found in the mitochondrion inner membrane. It catalyses the reaction a ubiquinone + NADH + 5 H(+)(in) = a ubiquinol + NAD(+) + 4 H(+)(out). Core subunit of the mitochondrial membrane respiratory chain NADH dehydrogenase (Complex I) which catalyzes electron transfer from NADH through the respiratory chain, using ubiquinone as an electron acceptor. Part of the enzyme membrane arm which is embedded in the lipid bilayer and involved in proton translocation. This Stenoderma rufum (Red fruit bat) protein is NADH-ubiquinone oxidoreductase chain 4L (MT-ND4L).